Here is a 233-residue protein sequence, read N- to C-terminus: DNA repair protein RecO (233 aa).

Belongs to the RecO family.

Its function is as follows. Involved in DNA repair and RecF pathway recombination. This chain is DNA repair protein RecO, found in Pseudomonas aeruginosa (strain UCBPP-PA14).